The sequence spans 61 residues: Photosystem II assembly protein Psb34 (61 aa).

The helical transmembrane segment at 36-56 (LIMAAITVVLVAGLIAVAVVA) threads the bilayer.

This sequence belongs to the Psb34 family. Part of the photosystem II (PSII) assembly intermediate RC47 complex (with D1, D2, CP47, PsbE, PsbF, PsbH, Psb27 and Psb28); minor amounts are found in other PSII complexes, including mature, dimeric PSII with PsbO and PsbV. No HliA or HliB are detected in any of these complexes. Its interaction with PSII requires both CP47 (psbB) and PsbH. HliA/HliB and Psb34 probably bind to a similar site on CP47; their binding seems to be mutually exclusive.

Its subcellular location is the cellular thylakoid membrane. In terms of biological role, involved in photosystem II (PSII) assembly and/or repair. Probably involved in conversion of late PSII assembly intermediates into mature dimeric PSII, it may mediate the optimal equlibrium of HliA/HliB among the intermediates containing CP47 (psbB) to facilitate photoprotection during assembly. This Synechocystis sp. (strain ATCC 27184 / PCC 6803 / Kazusa) protein is Photosystem II assembly protein Psb34.